The primary structure comprises 194 residues: ATP-dependent Clp protease proteolytic subunit (194 aa).

Residue S99 is the Nucleophile of the active site. The active site involves H124.

It belongs to the peptidase S14 family. In terms of assembly, fourteen ClpP subunits assemble into 2 heptameric rings which stack back to back to give a disk-like structure with a central cavity, resembling the structure of eukaryotic proteasomes.

It localises to the cytoplasm. It carries out the reaction Hydrolysis of proteins to small peptides in the presence of ATP and magnesium. alpha-casein is the usual test substrate. In the absence of ATP, only oligopeptides shorter than five residues are hydrolyzed (such as succinyl-Leu-Tyr-|-NHMec, and Leu-Tyr-Leu-|-Tyr-Trp, in which cleavage of the -Tyr-|-Leu- and -Tyr-|-Trp bonds also occurs).. In terms of biological role, cleaves peptides in various proteins in a process that requires ATP hydrolysis. Has a chymotrypsin-like activity. Plays a major role in the degradation of misfolded proteins. The polypeptide is ATP-dependent Clp protease proteolytic subunit (Borrelia garinii subsp. bavariensis (strain ATCC BAA-2496 / DSM 23469 / PBi) (Borreliella bavariensis)).